The primary structure comprises 362 residues: Zinc phosphodiesterase ELAC protein 1 (362 aa).

The Zn(2+) site is built by His62, His64, Asp66, His67, His181, Asp252, and His312. Asp66 functions as the Proton acceptor in the catalytic mechanism.

It belongs to the RNase Z family. Homodimer. Requires Zn(2+) as cofactor.

The protein resides in the cytoplasm. It is found in the cytosol. Its subcellular location is the nucleus. It carries out the reaction Endonucleolytic cleavage of RNA, removing extra 3' nucleotides from tRNA precursor, generating 3' termini of tRNAs. A 3'-hydroxy group is left at the tRNA terminus and a 5'-phosphoryl group is left at the trailer molecule.. Functionally, zinc phosphodiesterase, which displays some tRNA 3'-processing endonuclease activity. Specifically involved in tRNA repair: acts downstream of the ribosome-associated quality control (RQC) pathway by removing a 2',3'-cyclic phosphate from tRNAs following cleavage by ANKZF1. tRNAs are then processed by TRNT1. The chain is Zinc phosphodiesterase ELAC protein 1 (Elac1) from Mus musculus (Mouse).